A 216-amino-acid polypeptide reads, in one-letter code: Protein-methionine-sulfoxide reductase heme-binding subunit MsrQ (216 aa).

The next 5 membrane-spanning stretches (helical) occupy residues 16–36 (IWALYILGFLPAVWGFYLGAT), 48–68 (EHLLGIWALRFLIATLAITPI), 82–102 (ALGLLAFYYVMMHFLTYMVLD), 119–139 (FITIGMAALVLLIPLAVTSNI), and 155–175 (LVYVIAAAGALHFAMSVKVVG).

It belongs to the MsrQ family. As to quaternary structure, heterodimer of a catalytic subunit (MsrP) and a heme-binding subunit (MsrQ). FMN is required as a cofactor. Requires heme b as cofactor.

The protein resides in the cell inner membrane. In terms of biological role, part of the MsrPQ system that repairs oxidized periplasmic proteins containing methionine sulfoxide residues (Met-O), using respiratory chain electrons. Thus protects these proteins from oxidative-stress damage caused by reactive species of oxygen and chlorine generated by the host defense mechanisms. MsrPQ is essential for the maintenance of envelope integrity under bleach stress, rescuing a wide series of structurally unrelated periplasmic proteins from methionine oxidation. MsrQ provides electrons for reduction to the reductase catalytic subunit MsrP, using the quinone pool of the respiratory chain. The polypeptide is Protein-methionine-sulfoxide reductase heme-binding subunit MsrQ (Rhizobium meliloti (strain 1021) (Ensifer meliloti)).